Reading from the N-terminus, the 108-residue chain is Large ribosomal subunit protein uL24 (108 aa).

Belongs to the universal ribosomal protein uL24 family. As to quaternary structure, part of the 50S ribosomal subunit.

Functionally, one of two assembly initiator proteins, it binds directly to the 5'-end of the 23S rRNA, where it nucleates assembly of the 50S subunit. In terms of biological role, one of the proteins that surrounds the polypeptide exit tunnel on the outside of the subunit. The chain is Large ribosomal subunit protein uL24 from Frankia casuarinae (strain DSM 45818 / CECT 9043 / HFP020203 / CcI3).